The chain runs to 249 residues: Cytochrome c oxidase subunit 2 (249 aa).

Positions 1-13 (MLNLFQIMNMINN) are cleaved as a signal peptide. At 14 to 40 (DVPTPYGFYFQDSATPNQEGILELHDN) the chain is on the mitochondrial intermembrane side. The helical transmembrane segment at 41–62 (IMFYLVVILGLVSWMLFTIVRT) threads the bilayer. The Mitochondrial matrix segment spans residues 63-80 (YSRNPMAYKYIKHGQTIE). Residues 81 to 105 (IIWKIFPAVILLTIAFPSFILLYLC) form a helical membrane-spanning segment. Residues 106-249 (DEVISPAMTI…PKFLEWLNEQ (144 aa)) are Mitochondrial intermembrane-facing. Cu cation contacts are provided by His-184, Cys-219, Glu-221, Cys-223, His-227, and Met-230. Glu-221 contributes to the Mg(2+) binding site.

This sequence belongs to the cytochrome c oxidase subunit 2 family. Component of the cytochrome c oxidase (complex IV, CIV), a multisubunit enzyme composed of a catalytic core of 3 subunits and several supernumerary subunits. The complex exists as a monomer or a dimer and forms supercomplexes (SCs) in the inner mitochondrial membrane with ubiquinol-cytochrome c oxidoreductase (cytochrome b-c1 complex, complex III, CIII). Cu cation is required as a cofactor. In terms of processing, the signal sequence of COX2 is processed by IMP1.

The protein resides in the mitochondrion inner membrane. The catalysed reaction is 4 Fe(II)-[cytochrome c] + O2 + 8 H(+)(in) = 4 Fe(III)-[cytochrome c] + 2 H2O + 4 H(+)(out). Component of the cytochrome c oxidase, the last enzyme in the mitochondrial electron transport chain which drives oxidative phosphorylation. The respiratory chain contains 3 multisubunit complexes succinate dehydrogenase (complex II, CII), ubiquinol-cytochrome c oxidoreductase (cytochrome b-c1 complex, complex III, CIII) and cytochrome c oxidase (complex IV, CIV), that cooperate to transfer electrons derived from NADH and succinate to molecular oxygen, creating an electrochemical gradient over the inner membrane that drives transmembrane transport and the ATP synthase. Cytochrome c oxidase is the component of the respiratory chain that catalyzes the reduction of oxygen to water. Electrons originating from reduced cytochrome c in the intermembrane space (IMS) are transferred via the dinuclear copper A center (CU(A)) of subunit 2 and heme A of subunit 1 to the active site in subunit 1, a binuclear center (BNC) formed by heme A3 and copper B (CU(B)). The BNC reduces molecular oxygen to 2 water molecules using 4 electrons from cytochrome c in the IMS and 4 protons from the mitochondrial matrix. In Maudiozyma exigua (Yeast), this protein is Cytochrome c oxidase subunit 2 (COX2).